A 349-amino-acid polypeptide reads, in one-letter code: 5-deoxyribose 1-phosphate isomerase (349 aa).

Substrate is bound by residues Arg49–Ala51, Arg92, and Gln199. The active-site Proton donor is Asp240. Asn250 to Lys251 provides a ligand contact to substrate.

The protein belongs to the EIF-2B alpha/beta/delta subunits family. DrdI subfamily.

The catalysed reaction is 5-deoxy-alpha-D-ribose 1-phosphate = 5-deoxy-D-ribulose 1-phosphate. The protein operates within carbohydrate degradation. Functionally, catalyzes the isomerization of 5-deoxy-alpha-D-ribose 1-phosphate to 5-deoxy-D-ribulose 1-phosphate, as part of a 5-deoxyribose salvage pathway that recycles this toxic radical SAM enzyme by-product to mainstream metabolites. In Clostridium botulinum (strain Langeland / NCTC 10281 / Type F), this protein is 5-deoxyribose 1-phosphate isomerase.